Consider the following 303-residue polypeptide: Fe-S cluster assembly protein DRE2 (303 aa).

The interval 1-125 (MTHSRTALVL…WQKRAVTASA (125 aa)) is N-terminal SAM-like domain. A linker region spans residues 126 to 188 (PVKLAPRQPV…GDAPIAENDL (63 aa)). Cys202, Cys213, Cys216, and Cys218 together coordinate [2Fe-2S] cluster. Positions 202–218 (CGRTQTRRRKACKDCTC) are fe-S binding site A. The [4Fe-4S] cluster site is built by Cys266, Cys269, Cys277, and Cys280. 2 consecutive short sequence motifs (cx2C motif) follow at residues 266 to 269 (CGSC) and 277 to 280 (CSGC). The interval 266–280 (CGSCSLGDAFRCSGC) is fe-S binding site B.

This sequence belongs to the anamorsin family. Monomer. Interacts with TAH18. Interacts with MIA40. [2Fe-2S] cluster serves as cofactor. Requires [4Fe-4S] cluster as cofactor.

Its subcellular location is the cytoplasm. It is found in the mitochondrion intermembrane space. Functionally, component of the cytosolic iron-sulfur (Fe-S) protein assembly (CIA) machinery required for the maturation of extramitochondrial Fe-S proteins. Part of an electron transfer chain functioning in an early step of cytosolic Fe-S biogenesis, facilitating the de novo assembly of a [4Fe-4S] cluster on the scaffold complex CFD1-NBP35. Electrons are transferred to DRE2 from NADPH via the FAD- and FMN-containing protein TAH18. TAH18-DRE2 are also required for the assembly of the diferric tyrosyl radical cofactor of ribonucleotide reductase (RNR), probably by providing electrons for reduction during radical cofactor maturation in the catalytic small subunit RNR2. The sequence is that of Fe-S cluster assembly protein DRE2 from Eremothecium gossypii (strain ATCC 10895 / CBS 109.51 / FGSC 9923 / NRRL Y-1056) (Yeast).